Consider the following 354-residue polypeptide: MAELKNDRYLRALLKQPVDVTPVWMMRQAGRYLPEYKEVRAQAGDFMSLCRNAELACEVTLQPLRRYDLDAAILFSDILTVPDAMGLGLYFEAGEGPRFERPTDTIDAIKKLCIPDPEDELGYVMRAVSTIRRELNGSVPLIGFSGSPWTLATYMVEGGSSKTFEKIKRMAYAEPAALHMLLDKLADSVVLYLNAQVANGVQSLMIFDSWGGALSHHAYREFSLRYMQKIVDGLTRFADGRKVPVTLFTKGGGLWLESMAETGCDALGLDWTVDIGDARRRVGHKVALQGNMDPSMLYATPERIHQEVDQILASYGEGTGHVFNLGHGIHQHVDPEHAGAFINSVHELSGKYHK.

Substrate is bound by residues 27-31 (RQAGR), D77, Y154, S209, and H327.

It belongs to the uroporphyrinogen decarboxylase family. Homodimer.

The protein localises to the cytoplasm. It carries out the reaction uroporphyrinogen III + 4 H(+) = coproporphyrinogen III + 4 CO2. The protein operates within porphyrin-containing compound metabolism; protoporphyrin-IX biosynthesis; coproporphyrinogen-III from 5-aminolevulinate: step 4/4. Functionally, catalyzes the decarboxylation of four acetate groups of uroporphyrinogen-III to yield coproporphyrinogen-III. The sequence is that of Uroporphyrinogen decarboxylase from Shewanella frigidimarina (strain NCIMB 400).